Reading from the N-terminus, the 61-residue chain is DNA-directed RNA polymerase subunit Rpo6 (61 aa).

It belongs to the archaeal Rpo6/eukaryotic RPB6 RNA polymerase subunit family. Part of the RNA polymerase complex.

It is found in the cytoplasm. It carries out the reaction RNA(n) + a ribonucleoside 5'-triphosphate = RNA(n+1) + diphosphate. DNA-dependent RNA polymerase (RNAP) catalyzes the transcription of DNA into RNA using the four ribonucleoside triphosphates as substrates. The polypeptide is DNA-directed RNA polymerase subunit Rpo6 (Thermoplasma volcanium (strain ATCC 51530 / DSM 4299 / JCM 9571 / NBRC 15438 / GSS1)).